The following is a 405-amino-acid chain: Plasma serine protease inhibitor (405 aa).

A signal peptide spans 1–19; the sequence is MRFFPILCLVLFISHGVAS. Positions 20-24 are cleaved as a propeptide — removed in mature form; that stretch reads RRHSH. N-linked (GlcNAc...) asparagine glycosylation is present at Asn247.

Belongs to the serpin family. In terms of assembly, forms protease inhibiting heterodimers in extracellular body fluids with serine proteases such as activated protein C/coagulation factor V/F5, acrosin/ACR, chymotrypsinogen B/CTRB1, prothrombin/F2, factor Xa/F10, factor XI/F11, kallikrein/KLKB1, tissue kallikrein, trypsin/PRSS1, prostate specific antigen/KLK3, tissue plasminogen activator/PLAT and urinary plasminogen activator/PLAU. Forms membrane-anchored serine proteases inhibiting heterodimers with TMPRSS7 and TMPRSS11E. Interacts with SEMG2. N-glycosylated; glycans consist of a mixture of sialylated bi- (including sialyl-Lewis X epitopes), tri- and tetra-antennary complex-type chains; affects the maximal heparin- and thrombomodulin-enhanced rates of thrombin inhibition. O-glycosylated; further modified with 2 sialic acid residues. Proteolytically cleaved at the N-terminus; inhibits slightly the heparin- and thrombomodulin-enhanced rates of thrombin inhibition. Post-translationally, proteolytically cleaved. Inhibition of proteases is accompanied by formation of a stable enzyme-inhibitor complex and by degradation of the serpin to lower molecular weight derivatives. In terms of tissue distribution, not detected in blood plasma (at protein level). Expressed in testis, epididymis, seminal vesicles, prostate and ovaries.

The protein localises to the secreted. Its subcellular location is the extracellular space. With respect to regulation, its inhibitory activity is greatly enhanced in the presence of glycosaminoglycans, heparin, thrombomodulin and phospholipids vesicles. Heparin-dependent serine protease inhibitor acting in body fluids and secretions. Inactivates serine proteases by binding irreversibly to their serine activation site. Involved in the regulation of intravascular and extravascular proteolytic activities. Plays hemostatic roles in the blood plasma. Acts as a procoagulant and pro-inflammatory factor by inhibiting the anticoagulant activated protein C factor as well as the generation of activated protein C factor by the thrombin/thrombomodulin complex. Acts as an anticoagulant factor by inhibiting blood coagulation factors like prothrombin, factor XI, factor Xa, plasma kallikrein and fibrinolytic enzymes such as tissue- and urinary-type plasminogen activators. In seminal plasma, inactivates several serine proteases implicated in the reproductive system. Inhibits the serpin acrosin; indirectly protects component of the male genital tract from being degraded by excessive released acrosin. Inhibits tissue- and urinary-type plasminogen activator, prostate-specific antigen and kallikrein activities; has a control on the sperm motility and fertilization. Inhibits the activated protein C-catalyzed degradation of SEMG1 and SEMG2; regulates the degradation of semenogelin during the process of transfer of spermatozoa from the male reproductive tract into the female tract. In urine, inhibits urinary-type plasminogen activator and kallikrein activities. Inactivates membrane-anchored serine proteases activities such as MPRSS7 and TMPRSS11E. Inhibits urinary-type plasminogen activator-dependent tumor cell invasion and metastasis. May also play a non-inhibitory role in seminal plasma and urine as a hydrophobic hormone carrier by its binding to retinoic acid. The polypeptide is Plasma serine protease inhibitor (Serpina5) (Mus musculus (Mouse)).